We begin with the raw amino-acid sequence, 407 residues long: MKPTVWHHLRLCPHGHPDETIDDAAIAVDETGTIAWLGALSALPHGYAHWRREDLHGAWVTPGLVDCHTHLVYGGTRADEFAQRLAGVSYEEIARQGGGIVSTVRATRAADETTLFVQAAARLQPLLAEGVTAIEIKSGYGLDLASERKMLRVARQLGERFPVTVHTTFLGAHALPPEYAGRADAYIDEVCDRMLPTLADEGLVDAVDVFCERIGFSLAQTERVFEAATRRGLPVKLHAEQLSNAGGTALAARYRALSADHLEFLDEAGIEAMKAAGTVAVLLPGAYYFIRETQLPPIELLRKHGVPIALATDHNPGTSPLESLLLTLNMGCTLFRMTVPEVLQGVTRHAAAALGRADRHGALEVGRQADFAVWSVGSLAELAYWIGRPLCEQVVRGGTTVFRRMNG.

2 residues coordinate Fe(3+): H68 and H70. Zn(2+) contacts are provided by H68 and H70. Residues R77, Y140, and H173 each coordinate 4-imidazolone-5-propanoate. Y140 serves as a coordination point for N-formimidoyl-L-glutamate. Residue H238 coordinates Fe(3+). H238 lines the Zn(2+) pocket. Q241 is a binding site for 4-imidazolone-5-propanoate. D313 is a binding site for Fe(3+). D313 is a binding site for Zn(2+). N-formimidoyl-L-glutamate is bound by residues N315 and G317. T318 provides a ligand contact to 4-imidazolone-5-propanoate.

It belongs to the metallo-dependent hydrolases superfamily. HutI family. The cofactor is Zn(2+). Requires Fe(3+) as cofactor.

Its subcellular location is the cytoplasm. It catalyses the reaction 4-imidazolone-5-propanoate + H2O = N-formimidoyl-L-glutamate. It functions in the pathway amino-acid degradation; L-histidine degradation into L-glutamate; N-formimidoyl-L-glutamate from L-histidine: step 3/3. In terms of biological role, catalyzes the hydrolytic cleavage of the carbon-nitrogen bond in imidazolone-5-propanoate to yield N-formimidoyl-L-glutamate. It is the third step in the universal histidine degradation pathway. In Burkholderia cenocepacia (strain ATCC BAA-245 / DSM 16553 / LMG 16656 / NCTC 13227 / J2315 / CF5610) (Burkholderia cepacia (strain J2315)), this protein is Imidazolonepropionase.